Reading from the N-terminus, the 1175-residue chain is Beta-agarase AgaO (1175 aa).

The signal sequence occupies residues 1 to 29 (MRLSKSQGILPLAHAVLAAAIAYSTAATA). Residues 32–164 (YRLEAEDFTN…QWNLDKMELA (133 aa)) form the CBM6 1 domain. The tract at residues 169–208 (SSSSSGGGSTSSSSSGGSSSSSGSGSSSSGGSPEEGGHVS) is disordered. Over residues 178-200 (TSSSSSGGSSSSSGSGSSSSGGS) the composition is skewed to low complexity. In terms of domain architecture, CBM6 2 spans 211–339 (FKLEAESAHH…QFNIDYVIFE (129 aa)). Residues 355–481 (IADVNDSCPG…ESGCSPSQVA (127 aa)) form a disordered region. Positions 382–393 (DTDKDGIADNRD) are enriched in basic and acidic residues. Residues 471 to 481 (NESGCSPSQVA) show a composition bias toward polar residues. Glu-661 functions as the Proton donor in the catalytic mechanism. The Nucleophile role is filled by Glu-832.

The protein belongs to the glycosyl hydrolase 86 family.

It carries out the reaction Hydrolysis of (1-&gt;4)-beta-D-galactosidic linkages in agarose, giving the tetramer as the predominant product.. With respect to regulation, activity and stability are strongly enhanced by CaCl(2). Activity is not affected by sulfhydryl inhibitors such as iodoacetoamide and p-chloromercuribenzoate or by thiol reagents such as dithiothreitol and 2-mercaptoethanol. Strongly inhibited by N-bromosuccinimide and sodium dodecyl sulfate. Functionally, endo-type beta-agarase, which degrades agarose and agarose oligosaccharides more polymerized than hexamers to yield neoagarohexaose (NA6) as the main product, with lesser amounts of neoagarotetraose (NA4) and neoagarobiose (NA2). The protein is Beta-agarase AgaO of Microbulbifer thermotolerans.